Reading from the N-terminus, the 237-residue chain is Large ribosomal subunit protein bL25 (237 aa).

Residues 1-104 form an N-terminal domain region; the sequence is MELTAKPRTP…SVPVHTTGRS (104 aa). Positions 105–189 are middle domain; the sequence is QGEVQGGLVD…ELEAEVQAAQ (85 aa). The segment at 190–237 is C-terminal domain; it reads VAGLVAAGELSEEAAEAVLEGDASLEEVKAEASEDNAGTDSEDNSDAQ. The disordered stretch occupies residues 205–237; that stretch reads EAVLEGDASLEEVKAEASEDNAGTDSEDNSDAQ.

Belongs to the bacterial ribosomal protein bL25 family. CTC subfamily. Part of the 50S ribosomal subunit. Contacts proteins L11 and L16, the A site tRNA, and the 5S and 23S rRNAs.

Its function is as follows. This is one of 3 proteins that mediate the attachment of the 5S rRNA onto the large ribosomal subunit. This protein has three domains. The N-terminal one is bound on the solvent face, the middle domain fills the space between the 5S rRNA and the L11 arm contacting the 23S rRNA while the C-terminal domain is on the edge of the intersubunit interface and contacts the A site. The protein conformation changes upon binding of a tRNA mimic to the A site, although the mimic does not interact directly with CTC itself, consistent with CTCs presumed role in moderating A site binding. This is Large ribosomal subunit protein bL25 (rplY) from Deinococcus radiodurans (strain ATCC 13939 / DSM 20539 / JCM 16871 / CCUG 27074 / LMG 4051 / NBRC 15346 / NCIMB 9279 / VKM B-1422 / R1).